Consider the following 620-residue polypeptide: 1-deoxy-D-xylulose-5-phosphate synthase (620 aa).

Residues His80 and 121–123 each bind thiamine diphosphate; that span reads GHS. Asp152 contributes to the Mg(2+) binding site. Thiamine diphosphate contacts are provided by residues 153–154, Asn181, Tyr288, and Glu370; that span reads GA. Asn181 is a binding site for Mg(2+).

Belongs to the transketolase family. DXPS subfamily. Homodimer. The cofactor is Mg(2+). It depends on thiamine diphosphate as a cofactor.

The catalysed reaction is D-glyceraldehyde 3-phosphate + pyruvate + H(+) = 1-deoxy-D-xylulose 5-phosphate + CO2. Its pathway is metabolic intermediate biosynthesis; 1-deoxy-D-xylulose 5-phosphate biosynthesis; 1-deoxy-D-xylulose 5-phosphate from D-glyceraldehyde 3-phosphate and pyruvate: step 1/1. In terms of biological role, catalyzes the acyloin condensation reaction between C atoms 2 and 3 of pyruvate and glyceraldehyde 3-phosphate to yield 1-deoxy-D-xylulose-5-phosphate (DXP). This chain is 1-deoxy-D-xylulose-5-phosphate synthase, found in Escherichia coli (strain SMS-3-5 / SECEC).